Reading from the N-terminus, the 34-residue chain is Photosystem I reaction center subunit XII (34 aa).

A helical membrane pass occupies residues 9 to 29; the sequence is LIILGLIVVMHAGVLALRLGI.

This sequence belongs to the PsaM family.

The protein resides in the cellular thylakoid membrane. This is Photosystem I reaction center subunit XII from Prochlorococcus marinus subsp. pastoris (strain CCMP1986 / NIES-2087 / MED4).